Reading from the N-terminus, the 517-residue chain is L-amino-acid oxidase (517 aa).

Residues 1 to 18 (MNVFFMFSLLFLAALGSC) form the signal peptide. An intrachain disulfide couples Cys29 to Cys192. FAD contacts are provided by residues 62–63 (MA), 82–83 (EA), Arg90, and 106–109 (GPMR). Arg109 contacts substrate. An N-linked (GlcNAc...) asparagine glycan is attached at Asn191. Val280 lines the FAD pocket. A disulfide bridge connects residues Cys350 and Cys431. Tyr391 is a binding site for substrate. FAD contacts are provided by residues Glu476 and 483–488 (GWLDST). Substrate is bound at residue 483-484 (GW).

Belongs to the flavin monoamine oxidase family. FIG1 subfamily. In terms of assembly, homodimer; non-covalently linked. Requires FAD as cofactor. In terms of processing, N-glycosylated. Expressed by the venom gland.

It is found in the secreted. It carries out the reaction an L-alpha-amino acid + O2 + H2O = a 2-oxocarboxylate + H2O2 + NH4(+). Functionally, catalyzes an oxidative deamination of predominantly hydrophobic and aromatic L-amino acids, thus producing hydrogen peroxide that may contribute to the diverse toxic effects of this enzyme. Exhibits diverse biological activities, such as hemorrhage, hemolysis, edema, apoptosis of vascular endothelial cells or tumor cell lines, antiparasitic activities, as well as regulation of platelet aggregation. Effects of snake L-amino oxidases on platelets are controversial, since they either induce aggregation or inhibit agonist-induced aggregation. These different effects are probably due to different experimental conditions. This protein has antibacterial activities. The sequence is that of L-amino-acid oxidase from Pseudechis australis (Mulga snake).